A 101-amino-acid chain; its full sequence is Interleukin-8 (101 aa).

The signal sequence occupies residues 1–22 (MTSKLAVALLAAFLLSAALCEA). 2 disulfides stabilise this stretch: cysteine 34-cysteine 61 and cysteine 36-cysteine 77.

It belongs to the intercrine alpha (chemokine CxC) family. Homodimer. Interacts with TNFAIP6 (via Link domain); this interaction interferes with chemokine binding to glycosaminoglycans.

It localises to the secreted. Functionally, chemotactic factor that mediates inflammatory response by attracting neutrophils, basophils, and T-cells to clear pathogens and protect the host from infection. Also plays an important role in neutrophil activation. Released in response to an inflammatory stimulus, exerts its effect by binding to the G-protein-coupled receptors CXCR1 and CXCR2, primarily found in neutrophils, monocytes and endothelial cells. G-protein heterotrimer (alpha, beta, gamma subunits) constitutively binds to CXCR1/CXCR2 receptor and activation by IL8 leads to beta and gamma subunits release from Galpha (GNAI2 in neutrophils) and activation of several downstream signaling pathways including PI3K and MAPK pathways. This is Interleukin-8 (CXCL8) from Bos taurus (Bovine).